The primary structure comprises 450 residues: Putative serine/threonine-protein kinase R517/R518 (450 aa).

Residues 9 to 290 (KMTDTVLGKG…WSELFHHYWF (282 aa)) enclose the Protein kinase domain. ATP contacts are provided by residues 15 to 23 (LGKGGFSEV) and Lys38. Catalysis depends on Asp140, which acts as the Proton acceptor.

The protein belongs to the protein kinase superfamily. Ser/Thr protein kinase family.

It carries out the reaction L-seryl-[protein] + ATP = O-phospho-L-seryl-[protein] + ADP + H(+). The catalysed reaction is L-threonyl-[protein] + ATP = O-phospho-L-threonyl-[protein] + ADP + H(+). The polypeptide is Putative serine/threonine-protein kinase R517/R518 (Acanthamoeba polyphaga mimivirus (APMV)).